The following is a 462-amino-acid chain: Nitrate/nitrite transporter NarU (462 aa).

Topologically, residues 1-35 are cytoplasmic; sequence MTRQNENYNRYLLSDWRPENPAFWENKGKGIARRN. The helical transmembrane segment at 36–56 threads the bilayer; the sequence is LWISVSCLLLAFCVWMLFSAV. Residues 57-71 are Periplasmic-facing; it reads AVNLNKIGFNFTTDQ. Residues 72 to 92 form a helical membrane-spanning segment; it reads LFLLTALPSLSGAILRVPYSF. The Cytoplasmic segment spans residues 93-101; it reads MVPLFGGRK. Residues 102-122 form a helical membrane-spanning segment; the sequence is WTVLSTVILIIPCAWLGFAVQ. Topologically, residues 123-124 are periplasmic; sequence NP. The helical transmembrane segment at 125 to 145 threads the bilayer; the sequence is ATPFGVFMLIALLCGFAGANF. Topologically, residues 146-180 are cytoplasmic; sequence ASSMGNISFFFPKARQGSALGINGGLGNLGVSVMQ. The helical transmembrane segment at 181-201 threads the bilayer; it reads LIAPLVIFLPIFTFLGVQGVP. Over 202–206 the chain is Periplasmic; that stretch reads QPDGS. A helical membrane pass occupies residues 207–227; it reads LLALTNAAWIWVPLLAVATLA. Topologically, residues 228–258 are cytoplasmic; the sequence is AWFGMNDIGSSKASVASQLPVLKRLHLWLLS. A helical transmembrane segment spans residues 259–279; it reads LLYLATFGSFIGFSAGFAMLA. Residues 280 to 287 lie on the Periplasmic side of the membrane; sequence KTQFPDVN. A helical membrane pass occupies residues 288–308; that stretch reads ILQLAFFGPFIGALARSAGGV. Over 309-317 the chain is Cytoplasmic; sequence ISDKFGGVR. A helical transmembrane segment spans residues 318–338; the sequence is VTLINFIFMALFTALLFLTLP. At 339-341 the chain is on the periplasmic side; that stretch reads GSG. Residues 342–362 form a helical membrane-spanning segment; that stretch reads AGSFSAFYLVFMGLFLTAGLG. Residues 363-401 are Cytoplasmic-facing; the sequence is SGSTFQMIAVIFRQITLYNVKLRGGSDEQAQREAVTDTA. A helical transmembrane segment spans residues 402-422; the sequence is AALGFISAIGAVGGFFIPKAF. The Periplasmic portion of the chain corresponds to 423 to 432; that stretch reads GTSLALTGSP. Residues 433–453 traverse the membrane as a helical segment; sequence VGAMKIFLLFYLACVLLTWLV. Topologically, residues 454–462 are cytoplasmic; it reads YGRRKPKQQ.

Belongs to the major facilitator superfamily. Nitrate/nitrite porter (TC 2.A.1.8) family.

It localises to the cell inner membrane. Its function is as follows. Catalyzes nitrate uptake, nitrite uptake and nitrite export across the cytoplasmic membrane. The protein is Nitrate/nitrite transporter NarU (narU) of Salmonella typhimurium (strain LT2 / SGSC1412 / ATCC 700720).